We begin with the raw amino-acid sequence, 44 residues long: Hyaluronidase CdtHya1 (44 aa).

This sequence belongs to the glycosyl hydrolase 56 family. In terms of assembly, monomer. Contains disulfide bonds. In terms of processing, glycosylated. As to expression, expressed by the venom gland.

It localises to the secreted. It catalyses the reaction Random hydrolysis of (1-&gt;4)-linkages between N-acetyl-beta-D-glucosamine and D-glucuronate residues in hyaluronate.. Its function is as follows. Snake venom endo-hyaluronidase that degrades hyaluronan to smaller oligosaccharide fragments. In venom, it is not toxic by itself, but increases the diffusion of other venom proteins such as crotoxin (a neurotoxic and myotoxic PLA2) by degrading the extracellular matrix. In addition, it displays antiedematogenic activity, since it significantly diminishes the oedematogenic activity of crotoxin (probably by direct substrate hydrolysis, since hyaluronan possesses strong water-binding capacity). This Crotalus durissus terrificus (South American rattlesnake) protein is Hyaluronidase CdtHya1.